Consider the following 42-residue polypeptide: Serine/threonine-protein phosphatase 5 (42 aa).

Residues 38-42 (QLGVM) are required for autoinhibition.

Belongs to the PPP phosphatase family. PP-5 (PP-T) subfamily. As to quaternary structure, probably forms a complex composed of chaperones HSP90 and HSP70, co-chaperones STIP1/HOP, CDC37, PPP5C, PTGES3/p23, TSC1 and client protein TSC2. Probably forms a complex composed of chaperones HSP90 and HSP70, co-chaperones CDC37, PPP5C, TSC1 and client protein TSC2, CDK4, AKT, RAF1 and NR3C1; this complex does not contain co-chaperones STIP1/HOP and PTGES3/p23. Part of a complex with HSP90/HSP90AA1 and steroid receptors. Interacts (via TPR repeats) with HSP90AA1 (via TPR repeat-binding motif) or HSPA1A/HSPA1B; the interaction is direct and activates the phosphatase activity. Dissociates from HSPA1A/HSPA1B and HSP90AA1 in response to arachidonic acid. Interacts with CPNE1 (via VWFA domain). Interacts with CDC16, CDC27. Interacts with KLHDC10 (via the 6 Kelch repeats); inhibits the phosphatase activity on MAP3K5. Interacts with ATM and ATR; both interactions are induced by DNA damage and enhance ATM and ATR kinase activity. Interacts with RAD17; reduced by DNA damage. Interacts with nuclear receptors such as NR3C1/GCR and PPARG (activated by agonist); regulates their transactivation activities. Interacts (via TPR repeats) with S100 proteins S100A1, S100A2, S100A6, S100B and S100P; the interactions are calcium-dependent, strongly activate PPP5C phosphatase activity and compete with HSP90AA1 and MAP3K5 interactions. Interacts with SMAD2 and SMAD3 but not with SMAD1; decreases SMAD3 phosphorylation and protein levels. Interacts (via TPR repeats) with CRY1 and CRY2; the interaction with CRY2 down-regulates the phosphatase activity on CSNK1E. Interacts (via TPR repeats) with the active form of RAC1, GNA12 or GNA13; these interactions activate the phosphatase activity and translocate PPP5C to the cell membrane. Interacts with FLCN. Mg(2+) serves as cofactor. It depends on Mn(2+) as a cofactor. Post-translationally, activated by at least two different proteolytic cleavages producing a 56 kDa and a 50 kDa form.

The protein resides in the nucleus. It is found in the cytoplasm. The protein localises to the cell membrane. The enzyme catalyses O-phospho-L-seryl-[protein] + H2O = L-seryl-[protein] + phosphate. It catalyses the reaction O-phospho-L-threonyl-[protein] + H2O = L-threonyl-[protein] + phosphate. Its activity is regulated as follows. Autoinhibited. In the autoinhibited state, the TPR domain interacts with the catalytic region and prevents substrate access to the catalytic pocket. Allosterically activated by various polyunsaturated fatty acids, free long-chain fatty-acids and long-chain fatty acyl-CoA esters, arachidonic acid being the most effective activator. HSP90A and probably RAC1, GNA12 and GNA13 can also release the autoinhibition by the TPR repeat. Activation by RAC1, GNA12 and GNA13 is synergistic with the one produced by fatty acids binding. Inhibited by okadaic acid. Its function is as follows. Serine/threonine-protein phosphatase that dephosphorylates a myriad of proteins involved in different signaling pathways including the kinases CSNK1E, ASK1/MAP3K5, PRKDC and RAF1, the nuclear receptors NR3C1, PPARG, ESR1 and ESR2, SMAD proteins and TAU/MAPT. Implicated in wide ranging cellular processes, including apoptosis, differentiation, DNA damage response, cell survival, regulation of ion channels or circadian rhythms, in response to steroid and thyroid hormones, calcium, fatty acids, TGF-beta as well as oxidative and genotoxic stresses. Participates in the control of DNA damage response mechanisms such as checkpoint activation and DNA damage repair through, for instance, the regulation ATM/ATR-signaling and dephosphorylation of PRKDC and TP53BP1. Inhibits ASK1/MAP3K5-mediated apoptosis induced by oxidative stress. Plays a positive role in adipogenesis, mainly through the dephosphorylation and activation of PPARG transactivation function. Also dephosphorylates and inhibits the anti-adipogenic effect of NR3C1. Regulates the circadian rhythms, through the dephosphorylation and activation of CSNK1E. May modulate TGF-beta signaling pathway by the regulation of SMAD3 phosphorylation and protein expression levels. Dephosphorylates and may play a role in the regulation of TAU/MAPT. Through their dephosphorylation, may play a role in the regulation of ions channels such as KCNH2. Dephosphorylate FNIP1, disrupting interaction with HSP90AA1/Hsp90. The sequence is that of Serine/threonine-protein phosphatase 5 (PPP5C) from Oryctolagus cuniculus (Rabbit).